Consider the following 257-residue polypeptide: Flagellar brake protein YcgR 1 (257 aa).

Residues 1-18 show a composition bias toward polar residues; sequence MDTTQSNGQTDTQGQLHA. The tract at residues 1-30 is disordered; sequence MDTTQSNGQTDTQGQLHAQTAEGGNDFGRR. The PilZ domain occupies 133–246; sequence QRREYFRVDA…AENTLQRLIT (114 aa).

Belongs to the YcgR family. Monomer. Interacts with the flagellar basal bodies.

The protein resides in the bacterial flagellum basal body. Its function is as follows. Acts as a flagellar brake, regulating swimming and swarming in a bis-(3'-5') cyclic diguanylic acid (c-di-GMP)-dependent manner. Binds 1 c-di-GMP dimer per subunit. Increasing levels of c-di-GMP lead to decreased motility. The polypeptide is Flagellar brake protein YcgR 1 (Paraburkholderia phytofirmans (strain DSM 17436 / LMG 22146 / PsJN) (Burkholderia phytofirmans)).